A 444-amino-acid chain; its full sequence is Protein-serine O-palmitoleoyltransferase porcupine (444 aa).

10 helical membrane passes run 29–49 (NGTL…FLVW), 81–101 (VMIF…KLNG), 128–150 (FLTL…FAIV), 163–183 (TLYL…YVTF), 201–221 (LGVF…AIIS), 249–269 (YFIC…IVVA), 304–324 (FFQS…LLHA), 326–346 (DYQM…ETVF), 383–403 (VLII…FTGM), and 420–440 (WTIW…FLAL). Residue histidine 323 is part of the active site.

It belongs to the membrane-bound acyltransferase family. Porcupine subfamily.

The protein resides in the membrane. The catalysed reaction is [Wnt protein]-L-serine + (9Z)-hexadecenoyl-CoA = [Wnt protein]-O-(9Z)-hexadecenoyl-L-serine + CoA. Its function is as follows. Key regulator of the Wnt signaling pathway that mediates lipid modification of Wnt proteins. Acts as a protein-serine O-palmitoleoyltransferase that catalyzes the attachment of palmitoleate, a 16-carbon monounsaturated fatty acid (C16:1(9Z)), to Wnt proteins. Serine palmitoleoylation of WNT proteins is required for efficient binding to frizzled receptors. Has a role in cell specification, specifically in blastomere signaling. Involved in cytosketetal polarity. Required for the orientation of mitotic spindle axis. In Caenorhabditis briggsae, this protein is Protein-serine O-palmitoleoyltransferase porcupine.